The primary structure comprises 1088 residues: DNA polymerase II large subunit (1088 aa).

Belongs to the archaeal DNA polymerase II family. In terms of assembly, heterodimer of a large subunit and a small subunit.

It catalyses the reaction DNA(n) + a 2'-deoxyribonucleoside 5'-triphosphate = DNA(n+1) + diphosphate. The enzyme catalyses Exonucleolytic cleavage in the 3'- to 5'-direction to yield nucleoside 5'-phosphates.. In terms of biological role, possesses two activities: a DNA synthesis (polymerase) and an exonucleolytic activity that degrades single-stranded DNA in the 3'- to 5'-direction. Has a template-primer preference which is characteristic of a replicative DNA polymerase. This Thermoplasma volcanium (strain ATCC 51530 / DSM 4299 / JCM 9571 / NBRC 15438 / GSS1) protein is DNA polymerase II large subunit (polC).